Reading from the N-terminus, the 100-residue chain is Protein translation factor SUI1 homolog (100 aa).

This sequence belongs to the SUI1 family.

This Sulfurisphaera tokodaii (strain DSM 16993 / JCM 10545 / NBRC 100140 / 7) (Sulfolobus tokodaii) protein is Protein translation factor SUI1 homolog.